An 851-amino-acid polypeptide reads, in one-letter code: MAPDLASQRHSESFPSVNSRPNVILPGREGRREGLPPGGGTRGSLVPTRPVPPSPAPLGTSPYSWSRSGPGRGGGAGSSRVPRGVPGPAVCAPGSLLHHASPTQTMAAADGSLFDNPRTFSRRPPAQASRQAKATKRKYQASSEAPPAKRRNETSFLPAKKTSVKETQRTFKGNAQKMFSPKKHSVSTSDRNQEERQCIKTSSLFKNNPDIPELHRPVVKQVQEKVFTSAAFHELGLHPHLISTINTVLKMSSMTSVQKQSIPVLLEGRDALVRSQTGSGKTLAYCIPVVQSLQAMESKIQRSDGPYALVLVPTRELALQSFDTVQKLLKPFTWIVPGVLMGGEKRKSEKARLRKGINILISTPGRLVDHIKSTKNIHFSRLRWLVFDEADRILDLGFEKDITVILNAVNAECQKRQNVLLSATLTEGVTRLADISLHDPVSISVLDKSHDQLNPKDKAVQEVCPPPAGDKLDSFAIPESLKQHVTVVPSKLRLVCLAAFILQKCKFEEDQKMVVFFSSCELVEFHYSLFLQTLLSSSGAPASGQLPSASMRLKFLRLHGGMEQEERTAVFQEFSHSRRGVLLCTDVAARGLDLPQVTWIVQYNAPSSPAEYIHRIGRTARIGCHGSSLLILAPSEAEYVNSLASHKINVSEIKMEDILCVLTRDDCFKGKRWGAQKSHAVGPQEIRERATVLQTVFEDYVHSSERRVSWAKKALQSFIQAYATYPRELKHIFHVRSLHLGHVAKSFGLRDAPRNLSALTRKKRKAHVKRPDLHKKTQSKHSLAEILRSEYSSGMEADIAKVKKQNAPGEPGGRPLQHSLQPTPCFGRGKTLKWRKTQKGVQRDSKTSQKV.

Positions 1–196 (MAPDLASQRH…STSDRNQEER (196 aa)) are disordered. The Q motif signature appears at 230-259 (AAFHELGLHPHLISTINTVLKMSSMTSVQK). The 182-residue stretch at 262-443 (IPVLLEGRDA…DISLHDPVSI (182 aa)) folds into the Helicase ATP-binding domain. Position 275-282 (275-282 (SQTGSGKT)) interacts with ATP. Residues 388-391 (DEAD) carry the DEAD box motif. The region spanning 480–659 (SLKQHVTVVP…VSEIKMEDIL (180 aa)) is the Helicase C-terminal domain. 2 disordered regions span residues 762–784 (KKRK…HSLA) and 804–851 (KQNA…SQKV). Arg-828 is subject to Omega-N-methylarginine. Residues 841–851 (VQRDSKTSQKV) are compositionally biased toward basic and acidic residues.

Belongs to the DEAD box helicase family. DDX31/DBP7 subfamily. Interacts with NPM1; this interaction prevents interaction between NPM1 and HDM2. Weakly or undetectably expressed in normal organs. Up-regulated in renal cell carcinoma.

The protein resides in the nucleus. Its subcellular location is the nucleolus. It carries out the reaction ATP + H2O = ADP + phosphate + H(+). Its function is as follows. May have DNA helicase activity and RNA helicase activity. Probably have ssDNA and RNA dependent ATPase activity. Plays a role in ribosome biogenesis and TP53/p53 regulation through its interaction with NPM1. This Homo sapiens (Human) protein is ATP-dependent DNA helicase DDX31.